The sequence spans 245 residues: Probable 2-phosphosulfolactate phosphatase (245 aa).

It belongs to the ComB family. Mg(2+) is required as a cofactor.

It carries out the reaction (2R)-O-phospho-3-sulfolactate + H2O = (2R)-3-sulfolactate + phosphate. This is Probable 2-phosphosulfolactate phosphatase from Nostoc sp. (strain PCC 7120 / SAG 25.82 / UTEX 2576).